The chain runs to 112 residues: Cell cycle protein GpsB (112 aa).

Residues 42–77 (YQKMADMNNEVVKLSEENNKLKKEVEELRLRVATSR) adopt a coiled-coil conformation. The segment at 75–97 (TSRPSDNKSFSSNNSSSSNNNVD) is disordered. The span at 81–95 (NKSFSSNNSSSSNNN) shows a compositional bias: low complexity.

The protein belongs to the GpsB family. In terms of assembly, forms polymers through the coiled coil domains. Interacts with PBP1, MreC and EzrA.

It localises to the cytoplasm. Functionally, divisome component that associates with the complex late in its assembly, after the Z-ring is formed, and is dependent on DivIC and PBP2B for its recruitment to the divisome. Together with EzrA, is a key component of the system that regulates PBP1 localization during cell cycle progression. Its main role could be the removal of PBP1 from the cell pole after pole maturation is completed. Also contributes to the recruitment of PBP1 to the division complex. Not essential for septum formation. This chain is Cell cycle protein GpsB, found in Staphylococcus haemolyticus (strain JCSC1435).